The sequence spans 399 residues: MQSLAGKKILLGISGGIAAYKCAELTRRLVERGATVQVVMTHAAKEFITPLTMQAVSGRPVSDSLLDPAAEASMGHIELAKWADLVLLAPATADLIARMAAGMGNDLLTTLILATSAPVAIAPAMNQQMYRNIATQENLQTLIRRGYLTWGPAAGEQACGDVGPGRMLEPMELVAHCENFFAPKILVGKRVLITAGPTREALDPVRYITNHSSGKMGFALAKAAAQLGADVTLVSGPVHLPTPVGVNRIDVQSGLEMHSAVMKEATSHQIFIACAAVADYRPQTVAEQKIKKSRDNDTLTIEMVKNPDIVASVAALTENRPFTVGFAAETQDVETYARSKLVRKNLDMICANDVSIAGQGFNSNDNALTLFWKEGQHSLPLTSKDALASAVMHLIHEQM.

The tract at residues 1 to 190 (MQSLAGKKIL…FAPKILVGKR (190 aa)) is phosphopantothenoylcysteine decarboxylase. Cys159 (proton donor) is an active-site residue. Residues 191–399 (VLITAGPTRE…AVMHLIHEQM (209 aa)) form a phosphopantothenate--cysteine ligase region. CTP is bound by residues Asp279, Lys289, 307 to 310 (PDIV), Phe326, Lys340, and Lys344.

This sequence in the N-terminal section; belongs to the HFCD (homo-oligomeric flavin containing Cys decarboxylase) superfamily. In the C-terminal section; belongs to the PPC synthetase family. The cofactor is Mg(2+). It depends on FMN as a cofactor.

The enzyme catalyses N-[(R)-4-phosphopantothenoyl]-L-cysteine + H(+) = (R)-4'-phosphopantetheine + CO2. It carries out the reaction (R)-4'-phosphopantothenate + L-cysteine + CTP = N-[(R)-4-phosphopantothenoyl]-L-cysteine + CMP + diphosphate + H(+). The protein operates within cofactor biosynthesis; coenzyme A biosynthesis; CoA from (R)-pantothenate: step 2/5. It functions in the pathway cofactor biosynthesis; coenzyme A biosynthesis; CoA from (R)-pantothenate: step 3/5. Catalyzes two sequential steps in the biosynthesis of coenzyme A. In the first step cysteine is conjugated to 4'-phosphopantothenate to form 4-phosphopantothenoylcysteine. In the second step the latter compound is decarboxylated to form 4'-phosphopantotheine. The polypeptide is Coenzyme A biosynthesis bifunctional protein CoaBC (Vibrio cholerae serotype O1 (strain ATCC 39315 / El Tor Inaba N16961)).